A 206-amino-acid polypeptide reads, in one-letter code: Carbonic anhydrase (206 aa).

An Isoglutamyl lysine isopeptide (Lys-Gln) (interchain with Q-Cter in protein Pup) cross-link involves residue lysine 11. Zn(2+) is bound by residues cysteine 51, aspartate 53, histidine 104, and cysteine 107.

It belongs to the beta-class carbonic anhydrase family. As to quaternary structure, homotetramer. Zn(2+) is required as a cofactor.

It carries out the reaction hydrogencarbonate + H(+) = CO2 + H2O. Catalyzes the reversible hydration of carbon dioxide to form bicarbonate. The protein is Carbonic anhydrase (cynT) of Mycolicibacterium smegmatis (strain ATCC 700084 / mc(2)155) (Mycobacterium smegmatis).